The primary structure comprises 1020 residues: Phosphatidylinositol 3-kinase VPS34 (1020 aa).

In terms of domain architecture, C2 PI3K-type spans 49–210 (LSTKFEDPTV…NWLDKMVLPK (162 aa)). Positions 331 to 577 (DKELKPTPQL…DGPIKIYMDI (247 aa)) constitute a PIK helical domain. The PI3K/PI4K catalytic domain maps to 666-1004 (YPEESSVFKS…LINDSVNAFL (339 aa)). Residues 672-678 (VFKSSLA) form a G-loop region. The catalytic loop stretch occupies residues 873–881 (GVGDRHLDN). Positions 892–913 (HADFGYILGRDPKPFPPLMKLP) are activation loop.

Belongs to the PI3/PI4-kinase family. In terms of assembly, component of the autophagy-specific VPS34 PI3-kinase complex I composed of at least VPS15, VPS30, VPS34, and of the VPS34 PI3-kinase complex II composed of VPS15, VPS30, VPS34 and VPS38. Interacts with VMNA7. In terms of processing, autophosphorylated.

The protein resides in the golgi apparatus. It is found in the trans-Golgi network membrane. The protein localises to the endosome membrane. The enzyme catalyses a 1,2-diacyl-sn-glycero-3-phospho-(1D-myo-inositol) + ATP = a 1,2-diacyl-sn-glycero-3-phospho-(1D-myo-inositol-3-phosphate) + ADP + H(+). Multifunctional phosphatidylinositol 3-kinase involved in acidification of vacuoles, pH-dependent cell growth, and autophagocytosis. Plays an important role in protein transport and virulence. Component of the autophagy-specific VPS34 PI3-kinase complex I essential to recruit the ATG8-phosphatidylinositol conjugate and the ATG12-ATG5 conjugate to the pre-autophagosomal structure. Also involved in endosome-to-Golgi retrograde transport as part of the VPS34 PI3-kinase complex II. This second complex is required for the endosome-to-Golgi retrieval of PEP1 and KEX2, and the recruitment of VPS5 and VPS7, two components of the retromer complex, to endosomal membranes (probably through the synthesis of a specific pool of phosphatidylinositol 3-phosphate recruiting the retromer to the endosomes). Finally, it might also be involved in ethanol tolerance and cell wall integrity. This chain is Phosphatidylinositol 3-kinase VPS34, found in Candida albicans (strain SC5314 / ATCC MYA-2876) (Yeast).